Reading from the N-terminus, the 303-residue chain is Glycine--tRNA ligase alpha subunit (303 aa).

It belongs to the class-II aminoacyl-tRNA synthetase family. Tetramer of two alpha and two beta subunits.

It localises to the cytoplasm. The enzyme catalyses tRNA(Gly) + glycine + ATP = glycyl-tRNA(Gly) + AMP + diphosphate. The sequence is that of Glycine--tRNA ligase alpha subunit (glyQ) from Escherichia coli (strain K12).